We begin with the raw amino-acid sequence, 213 residues long: Uridine kinase (213 aa).

Residue 15 to 22 participates in ATP binding; it reads GASASGKS.

Belongs to the uridine kinase family.

The protein resides in the cytoplasm. It carries out the reaction uridine + ATP = UMP + ADP + H(+). It catalyses the reaction cytidine + ATP = CMP + ADP + H(+). Its pathway is pyrimidine metabolism; CTP biosynthesis via salvage pathway; CTP from cytidine: step 1/3. It participates in pyrimidine metabolism; UMP biosynthesis via salvage pathway; UMP from uridine: step 1/1. The chain is Uridine kinase from Salmonella agona (strain SL483).